Reading from the N-terminus, the 311-residue chain is DNA replication terminus site-binding protein (311 aa).

It belongs to the Tus family.

Its subcellular location is the cytoplasm. Trans-acting protein required for termination of DNA replication. Binds to DNA replication terminator sequences (terA to terF) to prevent the passage of replication forks. The termination efficiency will be affected by the affinity of this protein for the terminator sequence. This is DNA replication terminus site-binding protein from Yersinia pseudotuberculosis serotype I (strain IP32953).